A 294-amino-acid polypeptide reads, in one-letter code: 4-hydroxy-tetrahydrodipicolinate synthase (294 aa).

Thr-45 serves as a coordination point for pyruvate. Tyr-133 functions as the Proton donor/acceptor in the catalytic mechanism. Lys-161 functions as the Schiff-base intermediate with substrate in the catalytic mechanism. Position 203 (Ile-203) interacts with pyruvate.

The protein belongs to the DapA family. As to quaternary structure, homotetramer; dimer of dimers.

It localises to the cytoplasm. It catalyses the reaction L-aspartate 4-semialdehyde + pyruvate = (2S,4S)-4-hydroxy-2,3,4,5-tetrahydrodipicolinate + H2O + H(+). It functions in the pathway amino-acid biosynthesis; L-lysine biosynthesis via DAP pathway; (S)-tetrahydrodipicolinate from L-aspartate: step 3/4. Its function is as follows. Catalyzes the condensation of (S)-aspartate-beta-semialdehyde [(S)-ASA] and pyruvate to 4-hydroxy-tetrahydrodipicolinate (HTPA). This is 4-hydroxy-tetrahydrodipicolinate synthase from Buchnera aphidicola subsp. Schizaphis graminum (strain Sg).